The following is a 261-amino-acid chain: Glucose 1-dehydrogenase 2 (261 aa).

Position 11 to 35 (11 to 35 (VVTGGSKGLGRAMAVRFGQEQSKVV)) interacts with NADP(+). Ser145 contributes to the substrate binding site. Tyr158 functions as the Proton acceptor in the catalytic mechanism.

Belongs to the short-chain dehydrogenases/reductases (SDR) family. In terms of assembly, homotetramer.

The catalysed reaction is D-glucose + NAD(+) = D-glucono-1,5-lactone + NADH + H(+). It catalyses the reaction D-glucose + NADP(+) = D-glucono-1,5-lactone + NADPH + H(+). The polypeptide is Glucose 1-dehydrogenase 2 (gdhII) (Priestia megaterium (Bacillus megaterium)).